Here is a 129-residue protein sequence, read N- to C-terminus: Copper chaperone GriE (129 aa).

A signal peptide (tat-type signal) is located at residues 1–37 (MPMNRREMVMATTGAALAAAAAVPLLSGGEGEGAAEA). The interval 32-51 (EGAAEAAAAPAKATGRGREH) is disordered. The span at 34 to 45 (AAEAAAAPAKAT) shows a compositional bias: low complexity.

Belongs to the melC1 family. In terms of processing, predicted to be exported by the Tat system. The position of the signal peptide cleavage has not been experimentally proven.

In terms of biological role, involved in the transfer of Cu(2+) ions to the apo form of o-aminophenol oxidase GriF in the grixazone biosynthetic pathway. The sequence is that of Copper chaperone GriE (griE) from Streptomyces griseus subsp. griseus (strain JCM 4626 / CBS 651.72 / NBRC 13350 / KCC S-0626 / ISP 5235).